A 111-amino-acid polypeptide reads, in one-letter code: FK506-binding protein 1 (111 aa).

The segment at 1 to 20 is disordered; sequence MGVEKTIITQGSGPSPQVGQ. Positions 7–20 are enriched in polar residues; sequence IITQGSGPSPQVGQ. The 93-residue stretch at 19 to 111 folds into the PPIase FKBP-type domain; sequence GQKVTMEYTG…IFDVELKKIG (93 aa).

This sequence belongs to the FKBP-type PPIase family. FKBP1 subfamily.

Its subcellular location is the cytoplasm. The enzyme catalyses [protein]-peptidylproline (omega=180) = [protein]-peptidylproline (omega=0). With respect to regulation, inhibited by both FK506 and rapamycin. In terms of biological role, PPIases accelerate the folding of proteins. It catalyzes the cis-trans isomerization of proline imidic peptide bonds in oligopeptides. This chain is FK506-binding protein 1 (FPR1), found in Gibberella zeae (strain ATCC MYA-4620 / CBS 123657 / FGSC 9075 / NRRL 31084 / PH-1) (Wheat head blight fungus).